A 64-amino-acid polypeptide reads, in one-letter code: Conotoxin VnMLCL-05 (64 aa).

Residues 1 to 19 (MLCLPVFIILLLLASPAAP) form the signal peptide. Positions 20–43 (NPLQTRIQSNLIRAGPEDANIKTD) are excised as a propeptide. At K63 the chain carries Lysine amide.

It belongs to the conotoxin T superfamily. As to expression, expressed by the venom duct.

The protein localises to the secreted. The protein is Conotoxin VnMLCL-05 of Conus ventricosus (Mediterranean cone).